The chain runs to 1302 residues: 1-phosphatidylinositol 4,5-bisphosphate phosphodiesterase gamma-1 (1302 aa).

Ala2 carries the N-acetylalanine modification. The 116-residue stretch at 27 to 142 (RSLEVGTVMT…WIKGLTWLME (116 aa)) folds into the PH 1 domain. The EF-hand domain occupies 152–187 (QIERWLRKQFYSVDRNREDRISAKDLKNMLSQVNYR). Asp165, Asn167, Glu169, Arg171, and Asp176 together coordinate Ca(2+). Residues 320-464 (DTMNNPLSHY…LRRKILIKHK (145 aa)) form the PI-PLC X-box domain. Residues His335 and His380 contribute to the active site. The region spanning 489-523 (SIKNGILYLEDPVNHEWYPHYFVLTSSKIYYSEET) is the PH 2; first part domain. Phosphotyrosine is present on Tyr506. Residues 522–545 (ETSSDQGNEDEEEPKEASSSTELH) are disordered. 2 consecutive SH2 domains span residues 550 to 657 (WFHG…SEPV) and 668 to 756 (WYHA…RYPI). At Tyr771 the chain carries Phosphotyrosine; by SYK. A Phosphotyrosine modification is found at Tyr775. At Tyr783 the chain carries Phosphotyrosine; by ITK, SYK and TXK. Residues 791 to 851 (TFKCAVKALF…PSNYVEEMIN (61 aa)) form the SH3 domain. The PH 2; second part domain occupies 895–931 (FVFSISMPSVAQWSLDVAADSQEELQDWVKKIREVAQ). The PI-PLC Y-box domain occupies 953-1070 (LSELVVYCRP…GYVLQPSTMR (118 aa)). Position 977 is a phosphotyrosine (Tyr977). The C2 domain maps to 1071–1194 (DEAFDPFDKS…TGYRAVPLKN (124 aa)). Residues Ser1221, Ser1227, Ser1233, and Ser1248 each carry the phosphoserine modification. At Tyr1253 the chain carries Phosphotyrosine. Ser1263 bears the Phosphoserine mark.

As to quaternary structure, interacts (via SH2 domain) with FGFR1, FGFR2, FGFR3 and FGFR4 (phosphorylated). Interacts with RALGPS1. Interacts (via SH2 domains) with VIL1 (phosphorylated at C-terminus tyrosine phosphorylation sites). Interacts (via SH2 domain) with RET. Interacts with AGAP2 via its SH3 domain. Interacts with LAT (phosphorylated) upon TCR activation. Interacts (via SH3 domain) with the Pro-rich domain of TNK1. Associates with BLNK, VAV1, GRB2 and NCK1 in a B-cell antigen receptor-dependent fashion. Interacts with CBLB in activated T-cells; which inhibits phosphorylation. Interacts with SHB. Interacts (via SH3 domain) with the Arg/Gly-rich-flanked Pro-rich domains of KHDRBS1/SAM68. This interaction is selectively regulated by arginine methylation of KHDRBS1/SAM68. Interacts with INPP5D/SHIP1, THEMIS and CLNK. Interacts with FLT4 and KIT. Interacts with AXL. Interacts with SYK; activates PLCG1. Interacts with FLT1 (tyrosine-phosphorylated). Interacts (via SH2 domain) with PDGFRA and PDGFRB (tyrosine phosphorylated). Interacts with PIP5K1C. Interacts with NTRK1 and NTRK2 (phosphorylated upon ligand-binding). Interacts with TESPA1. Interacts with GRB2, LAT and THEMIS upon TCR activation in thymocytes; the association is weaker in the absence of TESPA1. Interacts (via C-terminal proline-rich domain (PRD)) with PLCG1 (via SH3 domain); this interaction leads to guanine nucleotide exchange from PlCG1 to DNM1 and enhances DNM1-dependent endocytosis. The cofactor is Ca(2+). Tyrosine phosphorylated in response to signaling via activated FLT3, KIT and PDGFRA. Tyrosine phosphorylated by activated FGFR1, FGFR2, FGFR3 and FGFR4. Tyrosine phosphorylated by activated FLT1 and KDR. Tyrosine phosphorylated by activated PDGFRB. The receptor-mediated activation of PLCG1 involves its phosphorylation by tyrosine kinases in response to ligation of a variety of growth factor receptors and immune system receptors. For instance, SYK phosphorylates and activates PLCG1 in response to ligation of the B-cell receptor. Phosphorylated by ITK and TXK on Tyr-783 upon TCR activation in T-cells. May be dephosphorylated by PTPRJ. Post-translationally, ubiquitinated by CBLB in activated T-cells.

Its subcellular location is the cell projection. The protein localises to the lamellipodium. It localises to the ruffle. It carries out the reaction a 1,2-diacyl-sn-glycero-3-phospho-(1D-myo-inositol-4,5-bisphosphate) + H2O = 1D-myo-inositol 1,4,5-trisphosphate + a 1,2-diacyl-sn-glycerol + H(+). It catalyses the reaction a 1,2-diacyl-sn-glycero-3-phospho-(1D-myo-inositol) + H2O = 1D-myo-inositol 1-phosphate + a 1,2-diacyl-sn-glycerol + H(+). Activated by phosphorylation on tyrosine residues. In terms of biological role, mediates the production of the second messenger molecules diacylglycerol (DAG) and inositol 1,4,5-trisphosphate (IP3). Plays an important role in the regulation of intracellular signaling cascades. Becomes activated in response to ligand-mediated activation of receptor-type tyrosine kinases, such as PDGFRA, PDGFRB, EGFR, FGFR1, FGFR2, FGFR3 and FGFR4. Plays a role in actin reorganization and cell migration. Guanine nucleotide exchange factor that binds the GTPase DNM1 and catalyzes the dissociation of GDP, allowing a GTP molecule to bind in its place, therefore enhancing DNM1-dependent endocytosis. In Mus musculus (Mouse), this protein is 1-phosphatidylinositol 4,5-bisphosphate phosphodiesterase gamma-1.